Here is a 181-residue protein sequence, read N- to C-terminus: Trafficking protein particle complex subunit 3 homolog (181 aa).

Cys70 carries S-palmitoyl cysteine lipidation.

The protein belongs to the TRAPP small subunits family. BET3 subfamily. Homodimer. Part of the multisubunit TRAPP (transport protein particle) complex.

The protein resides in the golgi apparatus. It is found in the cis-Golgi network. Its subcellular location is the endoplasmic reticulum. Functionally, may play a role in vesicular transport from endoplasmic reticulum to Golgi. Required for the systemic spread of the RNAi response. In Caenorhabditis elegans, this protein is Trafficking protein particle complex subunit 3 homolog (trpp-3).